The following is a 538-amino-acid chain: Growth factor receptor-bound protein 14 (538 aa).

The segment at 1-73 (MTTSLQDGQS…KAKDLEVQET (73 aa)) is disordered. Threonine 2 carries the N-acetylthreonine modification. Basic and acidic residues predominate over residues 54-69 (ATRRGAMDRRKAKDLE). The 87-residue stretch at 104-190 (KKQVIKVYSE…NKLYLRKNYA (87 aa)) folds into the Ras-associating domain. The region spanning 232 to 340 (YPEIHGFLHA…WVTAIRLLKY (109 aa)) is the PH domain. Residues serine 370 and serine 373 each carry the phosphoserine modification. The 97-residue stretch at 437–533 (WFHHRISRDE…VLPCKLKHYC (97 aa)) folds into the SH2 domain.

The protein belongs to the GRB7/10/14 family. In terms of assembly, interacts with the cytoplasmic domain of the autophosphorylated insulin receptor, through the SH2 domain. Interacts with GRB14 (via BPS domain); this interaction protects the tyrosines in the activation loop on INSR from dephosphorylation. Binds to the ankyrin repeat region of TNKS2 via its N-terminus. Interacts with activated NRAS. Interacts (via SH2 domain) with TEK/TIE2 (tyrosine phosphorylated). Phosphorylated on serine residues. Phosphorylated on tyrosine residues by TEK/TIE2.

It is found in the cytoplasm. It localises to the endosome membrane. Adapter protein which modulates coupling of cell surface receptor kinases with specific signaling pathways. Binds to, and suppresses signals from, the activated insulin receptor (INSR). Potent inhibitor of insulin-stimulated MAPK3 phosphorylation. Plays a critical role regulating PDPK1 membrane translocation in response to insulin stimulation and serves as an adapter protein to recruit PDPK1 to activated insulin receptor, thus promoting PKB/AKT1 phosphorylation and transduction of the insulin signal. In Rattus norvegicus (Rat), this protein is Growth factor receptor-bound protein 14 (Grb14).